Consider the following 248-residue polypeptide: PF03932 family protein CutC (248 aa).

This sequence belongs to the CutC family. As to quaternary structure, homodimer.

Its subcellular location is the cytoplasm. This Shigella boydii serotype 4 (strain Sb227) protein is PF03932 family protein CutC.